A 164-amino-acid polypeptide reads, in one-letter code: Thiol peroxidase (164 aa).

In terms of domain architecture, Thioredoxin spans 18–164; it reads KKVGDSAPDF…YEAVLSHLNK (147 aa). Cys-60 serves as the catalytic Cysteine sulfenic acid (-SOH) intermediate. Cys-60 and Cys-94 are disulfide-bonded.

This sequence belongs to the peroxiredoxin family. Tpx subfamily. Homodimer.

The catalysed reaction is a hydroperoxide + [thioredoxin]-dithiol = an alcohol + [thioredoxin]-disulfide + H2O. Functionally, thiol-specific peroxidase that catalyzes the reduction of hydrogen peroxide and organic hydroperoxides to water and alcohols, respectively. Plays a role in cell protection against oxidative stress by detoxifying peroxides. The sequence is that of Thiol peroxidase from Oceanobacillus iheyensis (strain DSM 14371 / CIP 107618 / JCM 11309 / KCTC 3954 / HTE831).